Reading from the N-terminus, the 318-residue chain is NADH-ubiquinone oxidoreductase chain 1 (318 aa).

8 helical membrane-spanning segments follow: residues 2–22, 70–90, 98–118, 140–160, 173–193, 217–237, 253–273, and 294–314; these read FTIN…FLTL, LYMA…TPLP, FNLG…SILW, ISYG…SGSF, WLLL…LAET, AGSF…MNAL, ELYT…FLWI, and LPLT…LSGI.

Belongs to the complex I subunit 1 family.

It localises to the mitochondrion inner membrane. The enzyme catalyses a ubiquinone + NADH + 5 H(+)(in) = a ubiquinol + NAD(+) + 4 H(+)(out). Core subunit of the mitochondrial membrane respiratory chain NADH dehydrogenase (Complex I) that is believed to belong to the minimal assembly required for catalysis. Complex I functions in the transfer of electrons from NADH to the respiratory chain. The immediate electron acceptor for the enzyme is believed to be ubiquinone. The sequence is that of NADH-ubiquinone oxidoreductase chain 1 (MT-ND1) from Sapajus apella (Brown-capped capuchin).